A 475-amino-acid polypeptide reads, in one-letter code: UDP-N-acetylmuramate--L-alanine ligase (475 aa).

Gly-112–Thr-118 provides a ligand contact to ATP.

It belongs to the MurCDEF family.

It is found in the cytoplasm. It catalyses the reaction UDP-N-acetyl-alpha-D-muramate + L-alanine + ATP = UDP-N-acetyl-alpha-D-muramoyl-L-alanine + ADP + phosphate + H(+). The protein operates within cell wall biogenesis; peptidoglycan biosynthesis. In terms of biological role, cell wall formation. The chain is UDP-N-acetylmuramate--L-alanine ligase from Cupriavidus pinatubonensis (strain JMP 134 / LMG 1197) (Cupriavidus necator (strain JMP 134)).